The primary structure comprises 186 residues: dCTP deaminase (186 aa).

Position 107-112 (107-112) interacts with dCTP; sequence KSTYAR. The active-site Proton donor/acceptor is the glutamate 133. DCTP is bound by residues glutamine 152, tyrosine 166, and glutamine 176.

Belongs to the dCTP deaminase family. In terms of assembly, homotrimer.

The enzyme catalyses dCTP + H2O + H(+) = dUTP + NH4(+). Its pathway is pyrimidine metabolism; dUMP biosynthesis; dUMP from dCTP (dUTP route): step 1/2. Functionally, catalyzes the deamination of dCTP to dUTP. In Campylobacter concisus (strain 13826), this protein is dCTP deaminase.